Consider the following 320-residue polypeptide: Putative GDP-polyphosphate phosphotransferase PKK2A (320 aa).

3 disordered regions span residues 1–21 (MRKKKDGQNLPDFRKNPPKLD), 246–267 (RPLPEIPHRPDSESDYVRPPRD), and 281–320 (EERIKKEEKAKKAKKPAKAAGKNSDKQKSSGGKGKKKSKK). The span at 12–21 (DFRKNPPKLD) shows a compositional bias: basic and acidic residues. The span at 281 to 290 (EERIKKEEKA) shows a compositional bias: basic and acidic residues.

The protein belongs to the polyphosphate kinase 2 (PPK2) family. Class I subfamily.

It carries out the reaction [phosphate](n) + GTP = [phosphate](n+1) + GDP. The sequence is that of Putative GDP-polyphosphate phosphotransferase PKK2A from Corynebacterium glutamicum (strain ATCC 13032 / DSM 20300 / JCM 1318 / BCRC 11384 / CCUG 27702 / LMG 3730 / NBRC 12168 / NCIMB 10025 / NRRL B-2784 / 534).